Reading from the N-terminus, the 151-residue chain is UPF0178 protein GSU0171 (151 aa).

Belongs to the UPF0178 family.

This Geobacter sulfurreducens (strain ATCC 51573 / DSM 12127 / PCA) protein is UPF0178 protein GSU0171.